Here is a 695-residue protein sequence, read N- to C-terminus: Elongation factor G (695 aa).

Residues 4-279 enclose the tr-type G domain; the sequence is EKVRNIGISA…AVTQYLPSPL (276 aa). GTP is bound by residues 13-20, 79-83, and 133-136; these read AHIDSGKT, DTPGH, and NKMD.

Belongs to the TRAFAC class translation factor GTPase superfamily. Classic translation factor GTPase family. EF-G/EF-2 subfamily.

It is found in the cytoplasm. Catalyzes the GTP-dependent ribosomal translocation step during translation elongation. During this step, the ribosome changes from the pre-translocational (PRE) to the post-translocational (POST) state as the newly formed A-site-bound peptidyl-tRNA and P-site-bound deacylated tRNA move to the P and E sites, respectively. Catalyzes the coordinated movement of the two tRNA molecules, the mRNA and conformational changes in the ribosome. This is Elongation factor G from Rhodopirellula baltica (strain DSM 10527 / NCIMB 13988 / SH1).